A 390-amino-acid polypeptide reads, in one-letter code: Succinate--CoA ligase [ADP-forming] subunit beta (390 aa).

The 236-residue stretch at 9–244 (KEIFRKYGVP…LDEEEPTEVE (236 aa)) folds into the ATP-grasp domain. ATP contacts are provided by residues lysine 46, 53 to 55 (GRG), glutamate 99, alanine 102, and glutamate 107. Asparagine 199 and aspartate 213 together coordinate Mg(2+). Substrate-binding positions include asparagine 264 and 321-323 (GIV).

This sequence belongs to the succinate/malate CoA ligase beta subunit family. As to quaternary structure, heterotetramer of two alpha and two beta subunits. Mg(2+) serves as cofactor.

The enzyme catalyses succinate + ATP + CoA = succinyl-CoA + ADP + phosphate. It carries out the reaction GTP + succinate + CoA = succinyl-CoA + GDP + phosphate. Its pathway is carbohydrate metabolism; tricarboxylic acid cycle; succinate from succinyl-CoA (ligase route): step 1/1. Functionally, succinyl-CoA synthetase functions in the citric acid cycle (TCA), coupling the hydrolysis of succinyl-CoA to the synthesis of either ATP or GTP and thus represents the only step of substrate-level phosphorylation in the TCA. The beta subunit provides nucleotide specificity of the enzyme and binds the substrate succinate, while the binding sites for coenzyme A and phosphate are found in the alpha subunit. The sequence is that of Succinate--CoA ligase [ADP-forming] subunit beta from Nautilia profundicola (strain ATCC BAA-1463 / DSM 18972 / AmH).